We begin with the raw amino-acid sequence, 546 residues long: Cation/calcium exchanger 5 (546 aa).

13 consecutive transmembrane segments (helical) span residues 13 to 33 (ALCLTLISILIFFFLTTTTIP), 88 to 108 (NLFFSIPILSLLILLHFYILI), 134 to 154 (AVTLLALGNGAPDVFASVAAL), 163 to 183 (FGAILSAGTFVSAFVVGFVAI), 194 to 214 (SFVRDVLFYLIAALFLFYVYL), 218 to 238 (IFVWQAIGFVGFYIFFVGFVF), 323 to 343 (SANIVFCPFALLYTCNSFVQL), 356 to 376 (LPLWLVVLFMTSSLAFLHFTV), 388 to 408 (VIVVAFIMSVFWISTIAGELL), 423 to 445 (ALLGLTVLAWGNSVGDLVADVAV), 455 to 475 (MAGCFAGPMFNMLVGLGSALV), 492 to 512 (VGIVIAFVFLLLSLMGSLLVI), and 522 to 542 (FWGICLVGLYVAFTFVSLIIA).

It belongs to the Ca(2+):cation antiporter (CaCA) (TC 2.A.19) family. Cation/calcium exchanger (CCX) subfamily.

Its subcellular location is the cell membrane. Membrane-localized H(+)-dependent K(+) and Na(+) transporter. This is Cation/calcium exchanger 5 (CCX5) from Arabidopsis thaliana (Mouse-ear cress).